A 420-amino-acid chain; its full sequence is Glutamate-1-semialdehyde 2,1-aminomutase (420 aa).

K261 is subject to N6-(pyridoxal phosphate)lysine.

This sequence belongs to the class-III pyridoxal-phosphate-dependent aminotransferase family. HemL subfamily. Pyridoxal 5'-phosphate serves as cofactor.

The protein localises to the cytoplasm. The enzyme catalyses (S)-4-amino-5-oxopentanoate = 5-aminolevulinate. It functions in the pathway porphyrin-containing compound metabolism; protoporphyrin-IX biosynthesis; 5-aminolevulinate from L-glutamyl-tRNA(Glu): step 2/2. This chain is Glutamate-1-semialdehyde 2,1-aminomutase, found in Thermoplasma volcanium (strain ATCC 51530 / DSM 4299 / JCM 9571 / NBRC 15438 / GSS1).